We begin with the raw amino-acid sequence, 668 residues long: Golgin candidate 2 (668 aa).

A disordered region spans residues 22 to 317; that stretch reads QAADSLRKDE…RQREERRRRR (296 aa). Residues 26–39 show a composition bias toward basic and acidic residues; it reads SLRKDEKSETHDEV. Composition is skewed to polar residues over residues 64 to 86 and 100 to 113; these read GSDS…LSSS and SAPS…NTKL. Low complexity-rich tracts occupy residues 123-141 and 168-178; these read STPN…GGTS and SSSSNVVNSRG. Composition is skewed to basic and acidic residues over residues 184–207, 215–237, and 250–259; these read TNKE…RNAP, THKE…RRSA, and GKRDGRESRR. Over residues 290 to 302 the composition is skewed to acidic residues; sequence DESESDYESDSST. The span at 303–312 shows a compositional bias: basic and acidic residues; that stretch reads DSERERQREE. Positions 331-539 form a coiled coil; that stretch reads AVIKERENMV…SQVEALSSEK (209 aa). 2 helical membrane passes run 594–614 and 622–642; these read KHLG…TVFL and IWAV…LLSH.

Its subcellular location is the golgi apparatus membrane. Golgi matrix protein playing a role in tethering of vesicles to Golgi membranes and in maintaining the overall structure of the Golgi apparatus. This chain is Golgin candidate 2 (GC2), found in Arabidopsis thaliana (Mouse-ear cress).